Consider the following 204-residue polypeptide: Prephenate decarboxylase (204 aa).

Belongs to the prephenate decarboxylase family.

The protein localises to the cytoplasm. The catalysed reaction is prephenate + H(+) = 3-[(4R)-4-hydroxycyclohexa-1,5-dien-1-yl]-2-oxopropanoate + CO2. It functions in the pathway antibiotic biosynthesis; bacilysin biosynthesis. In terms of biological role, part of the bacABCDEF operon responsible for the biosynthesis of the nonribosomally synthesized dipeptide antibiotic bacilysin, composed of L-alanine and L-anticapsin. Bacilysin is an irreversible inactivator of the glutaminase domain of glucosamine synthetase. BacA is an unusual prephenate decarboxylase that avoids the typical aromatization of the cyclohexadienol ring of prephenate. BacA catalyzes the protonation of prephenate (1-carboxy-4-hydroxy-alpha-oxo-2,5-cyclohexadiene-1-propanoic acid) at C6 position, followed by a decarboxylation to produce the endocyclic-delta(4),delta(8)-7R-dihydro-hydroxyphenylpyruvate (en-H2HPP). En-H2HPP is able to undergo a slow nonenzymatic isomerization to produce the exocyclic-delta(3),delta(5)-dihydro-hydroxyphenylpyruvate (ex-H2HPP). BacA isomerizes only the pro-R double bond in prephenate. The protein is Prephenate decarboxylase of Bacillus subtilis (strain 168).